Here is a 206-residue protein sequence, read N- to C-terminus: Probable glutathione S-transferase 8 (206 aa).

In terms of domain architecture, GST N-terminal spans 2-79 (VHYKLSYFPI…FLARQFGING (78 aa)). Residues Tyr8, Trp39, Lys43, 49 to 51 (GQL), and 63 to 64 (QS) contribute to the glutathione site. Residues 81-206 (CAWEEAQVNS…WLETRPETQF (126 aa)) enclose the GST C-terminal domain.

The protein belongs to the GST superfamily. Sigma family.

The catalysed reaction is RX + glutathione = an S-substituted glutathione + a halide anion + H(+). Its function is as follows. Conjugation of reduced glutathione to a wide number of exogenous and endogenous hydrophobic electrophiles. The sequence is that of Probable glutathione S-transferase 8 (gst-8) from Caenorhabditis elegans.